Consider the following 1083-residue polypeptide: Kinesin-like protein klp-19 (1083 aa).

In terms of domain architecture, Kinesin motor spans 6 to 328 (SLRVVVRARP…LRYADRAKQI (323 aa)). 85-92 (GQTGSGKT) is a binding site for ATP. A coiled-coil region spans residues 408-435 (MSALTQKNSRLEEDKAKLQSMLTDVRNT). A compositionally biased stretch (acidic residues) spans 458 to 471 (TEESTTLADDDNDE). Residues 458-479 (TEESTTLADDDNDETALGGQDD) form a disordered region. Positions 487 to 650 (LPELQAELDD…KSKLQKREND (164 aa)) form a coiled coil. The segment covering 1044–1055 (DDSQPSPSNSTF) has biased composition (polar residues). The tract at residues 1044 to 1083 (DDSQPSPSNSTFVIGAAPTSEADGVPPIKRKSRRTDLGPL) is disordered.

This sequence belongs to the TRAFAC class myosin-kinesin ATPase superfamily. Kinesin family. Expressed in the gonad.

The protein localises to the nucleus. It localises to the nucleoplasm. It is found in the cytoplasm. Its subcellular location is the cytoskeleton. The protein resides in the spindle. The protein localises to the chromosome. Required for chromosome movement and orientation on spindle poles in mitosis and meiosis. May play a role in early anterior-posterior chromosome movement in mitotic embryos. This chain is Kinesin-like protein klp-19, found in Caenorhabditis elegans.